A 242-amino-acid chain; its full sequence is Segregation and condensation protein A (242 aa).

The protein belongs to the ScpA family. Component of a cohesin-like complex composed of ScpA, ScpB and the Smc homodimer, in which ScpA and ScpB bind to the head domain of Smc. The presence of the three proteins is required for the association of the complex with DNA.

Its subcellular location is the cytoplasm. Participates in chromosomal partition during cell division. May act via the formation of a condensin-like complex containing Smc and ScpB that pull DNA away from mid-cell into both cell halves. This is Segregation and condensation protein A from Lactococcus lactis subsp. cremoris (strain SK11).